The chain runs to 495 residues: Probable cytochrome P450 508C1 (495 aa).

Residues 3 to 21 traverse the membrane as a helical segment; that stretch reads LLNSLLLLFLIYLIHSFYI. Residue Cys442 participates in heme binding.

It belongs to the cytochrome P450 family. Heme serves as cofactor.

Its subcellular location is the membrane. The sequence is that of Probable cytochrome P450 508C1 (cyp508C1) from Dictyostelium discoideum (Social amoeba).